Reading from the N-terminus, the 331-residue chain is Serpentine receptor class alpha-9 (331 aa).

Transmembrane regions (helical) follow at residues 26–46 (IDLL…QLVL), 58–78 (LILE…IEAI), 104–124 (YLKV…GLMI), 142–162 (IIGF…GKLF), 189–209 (YFTV…LLKI), 238–258 (VCFL…GVGA), and 275–295 (LCVV…LLLI).

Belongs to the nematode receptor-like protein sra family.

It localises to the membrane. The protein is Serpentine receptor class alpha-9 (sra-9) of Caenorhabditis elegans.